The primary structure comprises 324 residues: Gamma-soluble NSF attachment protein (324 aa).

The span at 285-298 (NPTINSTAPQQQYS) shows a compositional bias: polar residues. A disordered region spans residues 285-324 (NPTINSTAPQQQYSNTTTTTTNNTNNNNPTSQQDDDEDVL). Residues 299–312 (NTTTTTTNNTNNNN) are compositionally biased toward low complexity.

This sequence belongs to the SNAP family. In terms of assembly, interacts with nsfA and probably SNARE proteins.

It localises to the cytoplasmic vesicle membrane. Its function is as follows. May be required for vesicular transport between the endoplasmic reticulum and the Golgi apparatus. Involved in vesicle fusion with nsfA and probably SNARE proteins. This chain is Gamma-soluble NSF attachment protein (snpC), found in Dictyostelium discoideum (Social amoeba).